Here is a 66-residue protein sequence, read N- to C-terminus: Large ribosomal subunit protein uL29 (66 aa).

This sequence belongs to the universal ribosomal protein uL29 family.

This Thermococcus gammatolerans (strain DSM 15229 / JCM 11827 / EJ3) protein is Large ribosomal subunit protein uL29.